A 206-amino-acid polypeptide reads, in one-letter code: Outer-membrane lipoprotein carrier protein (206 aa).

Residues 1-20 (MRLIRMLLPVLALTTLTAHA) form the signal peptide.

Belongs to the LolA family. Monomer.

The protein resides in the periplasm. Participates in the translocation of lipoproteins from the inner membrane to the outer membrane. Only forms a complex with a lipoprotein if the residue after the N-terminal Cys is not an aspartate (The Asp acts as a targeting signal to indicate that the lipoprotein should stay in the inner membrane). This is Outer-membrane lipoprotein carrier protein from Pseudomonas fluorescens (strain Pf0-1).